The following is a 226-amino-acid chain: PKHD-type hydroxylase PP_0862 (226 aa).

One can recognise a Fe2OG dioxygenase domain in the interval 78–178; sequence KVFPPLINCY…RYAAFFWTQS (101 aa). Positions 96, 98, and 159 each coordinate Fe cation. Arg-169 provides a ligand contact to 2-oxoglutarate.

Fe(2+) is required as a cofactor. L-ascorbate serves as cofactor.

The polypeptide is PKHD-type hydroxylase PP_0862 (Pseudomonas putida (strain ATCC 47054 / DSM 6125 / CFBP 8728 / NCIMB 11950 / KT2440)).